Consider the following 131-residue polypeptide: Biogenesis of lysosome-related organelles complex 1 subunit CNL1 (131 aa).

Positions 1–29 (MSAPDSNSGHAHDSAQNEGAAEGTRDPFG) are disordered. A coiled-coil region spans residues 73–101 (DAIDINIEEMRRILQKCEELETHFDMLDQ).

Belongs to the BLOC1S4 family. In terms of assembly, component of the biogenesis of lysosome-related organelles complex-1 (BLOC-1).

It is found in the cytoplasm. Component of the biogenesis of lysosome-related organelles complex-1 (BLOC-1), a complex that is involved in endosomal cargo sorting. This is Biogenesis of lysosome-related organelles complex 1 subunit CNL1 (CLN1) from Lachancea thermotolerans (strain ATCC 56472 / CBS 6340 / NRRL Y-8284) (Yeast).